A 182-amino-acid polypeptide reads, in one-letter code: Cytidylate kinase (182 aa).

Residue Gly7–Ser15 participates in ATP binding.

Belongs to the cytidylate kinase family. Type 2 subfamily.

The protein resides in the cytoplasm. The enzyme catalyses CMP + ATP = CDP + ADP. It carries out the reaction dCMP + ATP = dCDP + ADP. This is Cytidylate kinase from Methanoregula boonei (strain DSM 21154 / JCM 14090 / 6A8).